The following is a 182-amino-acid chain: Probable RNA 2'-phosphotransferase (182 aa).

The protein belongs to the KptA/TPT1 family.

Removes the 2'-phosphate from RNA via an intermediate in which the phosphate is ADP-ribosylated by NAD followed by a presumed transesterification to release the RNA and generate ADP-ribose 1''-2''-cyclic phosphate (APPR&gt;P). May function as an ADP-ribosylase. This is Probable RNA 2'-phosphotransferase from Flavobacterium johnsoniae (strain ATCC 17061 / DSM 2064 / JCM 8514 / BCRC 14874 / CCUG 350202 / NBRC 14942 / NCIMB 11054 / UW101) (Cytophaga johnsonae).